The chain runs to 347 residues: GTP 3',8-cyclase (347 aa).

In terms of domain architecture, Radical SAM core spans 12 to 242 (FRPFGVLRLS…QRIDARWPLR (231 aa)). Arg-19 contacts GTP. [4Fe-4S] cluster-binding residues include Cys-26 and Cys-30. Tyr-32 provides a ligand contact to S-adenosyl-L-methionine. Position 33 (Cys-33) interacts with [4Fe-4S] cluster. Arg-65 is a binding site for GTP. Gly-69 is an S-adenosyl-L-methionine binding site. Thr-104 is a binding site for GTP. Ser-129 is an S-adenosyl-L-methionine binding site. Position 178 (Lys-178) interacts with GTP. Met-212 contacts S-adenosyl-L-methionine. Positions 275 and 278 each coordinate [4Fe-4S] cluster. 280–282 (RLR) contacts GTP. Cys-292 contacts [4Fe-4S] cluster.

It belongs to the radical SAM superfamily. MoaA family. As to quaternary structure, monomer and homodimer. It depends on [4Fe-4S] cluster as a cofactor.

It catalyses the reaction GTP + AH2 + S-adenosyl-L-methionine = (8S)-3',8-cyclo-7,8-dihydroguanosine 5'-triphosphate + 5'-deoxyadenosine + L-methionine + A + H(+). Its pathway is cofactor biosynthesis; molybdopterin biosynthesis. Functionally, catalyzes the cyclization of GTP to (8S)-3',8-cyclo-7,8-dihydroguanosine 5'-triphosphate. The chain is GTP 3',8-cyclase from Synechococcus sp. (strain WH7803).